The sequence spans 400 residues: Phosphoglycerate kinase (400 aa).

Substrate contacts are provided by residues 24-26 (DFN), Arg39, 62-65 (HLGK), Arg123, and Arg156. ATP contacts are provided by residues Lys207, Gly298, Glu329, and 356–359 (GGDS).

Belongs to the phosphoglycerate kinase family. Monomer.

It localises to the cytoplasm. It catalyses the reaction (2R)-3-phosphoglycerate + ATP = (2R)-3-phospho-glyceroyl phosphate + ADP. It functions in the pathway carbohydrate degradation; glycolysis; pyruvate from D-glyceraldehyde 3-phosphate: step 2/5. The chain is Phosphoglycerate kinase from Clostridioides difficile (strain 630) (Peptoclostridium difficile).